The sequence spans 65 residues: Large ribosomal subunit protein bL35 (65 aa).

The interval 1–65 (MQKIKTNRSA…KELKRLLPGM (65 aa)) is disordered. Composition is skewed to basic residues over residues 10–19 (AAKRFKRTKS) and 33–47 (LTKKNRKRKRSLRKS). A compositionally biased stretch (basic and acidic residues) spans 54–65 (NNKELKRLLPGM).

Belongs to the bacterial ribosomal protein bL35 family.

The sequence is that of Large ribosomal subunit protein bL35 from Desulfosudis oleivorans (strain DSM 6200 / JCM 39069 / Hxd3) (Desulfococcus oleovorans).